The primary structure comprises 495 residues: 3-octaprenyl-4-hydroxybenzoate carboxy-lyase (495 aa).

Asn-172 contributes to the Mn(2+) binding site. Residues 175–177 (IYR), 189–191 (RWL), and 194–195 (RG) each bind prenylated FMN. Glu-238 contacts Mn(2+). The active-site Proton donor is Asp-287.

Belongs to the UbiD family. Homohexamer. Requires prenylated FMN as cofactor. It depends on Mn(2+) as a cofactor.

Its subcellular location is the cell membrane. It catalyses the reaction a 4-hydroxy-3-(all-trans-polyprenyl)benzoate + H(+) = a 2-(all-trans-polyprenyl)phenol + CO2. It functions in the pathway cofactor biosynthesis; ubiquinone biosynthesis. Catalyzes the decarboxylation of 3-octaprenyl-4-hydroxy benzoate to 2-octaprenylphenol, an intermediate step in ubiquinone biosynthesis. The sequence is that of 3-octaprenyl-4-hydroxybenzoate carboxy-lyase from Edwardsiella ictaluri (strain 93-146).